We begin with the raw amino-acid sequence, 362 residues long: UDP-3-O-acylglucosamine N-acyltransferase 1 (362 aa).

His258 (proton acceptor) is an active-site residue.

The protein belongs to the transferase hexapeptide repeat family. LpxD subfamily. In terms of assembly, homotrimer.

The enzyme catalyses a UDP-3-O-[(3R)-3-hydroxyacyl]-alpha-D-glucosamine + a (3R)-hydroxyacyl-[ACP] = a UDP-2-N,3-O-bis[(3R)-3-hydroxyacyl]-alpha-D-glucosamine + holo-[ACP] + H(+). It functions in the pathway bacterial outer membrane biogenesis; LPS lipid A biosynthesis. Functionally, catalyzes the N-acylation of UDP-3-O-acylglucosamine using 3-hydroxyacyl-ACP as the acyl donor. Is involved in the biosynthesis of lipid A, a phosphorylated glycolipid that anchors the lipopolysaccharide to the outer membrane of the cell. This Nitrobacter winogradskyi (strain ATCC 25391 / DSM 10237 / CIP 104748 / NCIMB 11846 / Nb-255) protein is UDP-3-O-acylglucosamine N-acyltransferase 1.